Consider the following 85-residue polypeptide: Toxin TdNa9 (85 aa).

The first 21 residues, 1-21 (MLKFAIAVALLLFIGLELREA), serve as a signal peptide directing secretion. The LCN-type CS-alpha/beta domain maps to 22-84 (RDGYPQSKVN…YGDPGTKPCM (63 aa)). 4 disulfide bridges follow: Cys33–Cys83, Cys37–Cys58, Cys43–Cys63, and Cys47–Cys65.

It belongs to the long (4 C-C) scorpion toxin superfamily. Sodium channel inhibitor family. Beta subfamily. Expressed by the venom gland.

Its subcellular location is the secreted. In terms of biological role, alpha toxins bind voltage-independently at site-3 of sodium channels (Nav) and inhibit the inactivation of the activated channels, thereby blocking neuronal transmission. This toxin binds, in vitro, to sodium channels and inhibits the inactivation of the activated channels. Seems not toxic to mice, crickets and sweet-water shrimps. The polypeptide is Toxin TdNa9 (Tityus discrepans (Venezuelan scorpion)).